A 532-amino-acid polypeptide reads, in one-letter code: Fatty aldehyde dehydrogenase HFD1 (532 aa).

Phosphoserine is present on Ser111. A helical transmembrane segment spans residues 134–152 (IIAPFNFPLLLAFAPLAAA). 214–219 (GSPRVG) contacts NAD(+). Active-site residues include Glu236 and Cys273.

The protein belongs to the aldehyde dehydrogenase family.

The protein resides in the lipid droplet. It localises to the mitochondrion outer membrane. It is found in the endosome membrane. The protein localises to the cytoplasmic granule membrane. It carries out the reaction an aldehyde + NAD(+) + H2O = a carboxylate + NADH + 2 H(+). The enzyme catalyses hexadecanoate + NADH + 2 H(+) = hexadecanal + NAD(+) + H2O. It catalyses the reaction 4-hydroxybenzaldehyde + NAD(+) + H2O = 4-hydroxybenzoate + NADH + 2 H(+). In terms of biological role, catalyzes the oxidation of long-chain aliphatic aldehydes to fatty acids. Responsible for conversion of the sphingosine 1-phosphate (S1P) degradation product hexadecenal to hexadecenoic acid. Involved in coenzyme Q (CoQ) biosynthesis, catalyzing the last step in the tyrosine to 4-hydroxybenzoate (4-HB) pathway. Oxidizes 4-hydroxybenzaldehyde (4-Hbz) to 4-HB, the aromatic precursor for coenzyme Q. The chain is Fatty aldehyde dehydrogenase HFD1 (HFD1) from Saccharomyces cerevisiae (strain ATCC 204508 / S288c) (Baker's yeast).